Consider the following 559-residue polypeptide: Glypican-1 (559 aa).

Positions 1–23 (MELRARGWWLLYAAAVLVACARG) are cleaved as a signal peptide. 7 cysteine pairs are disulfide-bonded: C32/C68, C62/C256, C69/C259, C191/C343, C246/C279, C268/C415, and C272/C401. N-linked (GlcNAc...) asparagine glycosylation is found at N79 and N116. The disordered stretch occupies residues 478–539 (FQDASDDGSG…SAAAPTPPQA (62 aa)). 3 O-linked (Xyl...) (heparan sulfate) serine glycosylation sites follow: S486, S488, and S490. S530 carries GPI-anchor amidated serine lipidation. Residues 531–559 (AAAPTPPQASPLLLLGLALALPAVAPRGR) constitute a propeptide, removed in mature form.

This sequence belongs to the glypican family. In terms of processing, S-nitrosylated in a Cu(2+)-dependent manner. Nitric acid (NO) is released from the nitrosylated cysteines by ascorbate or by some other reducing agent, in a Cu(2+) or Zn(2+) dependent manner. This free nitric oxide is then capable of cleaving the heparan sulfate side chains. N- and O-glycosylated. N-glycosylation is mainly of the complex type containing sialic acid. O-glycosylated with heparan sulfate. The heparan sulfate chains can be cleaved either by the action of heparanase or, degraded by a deaminative process that uses nitric oxide (NO) released from the S-nitrosylated cysteines. This process is triggered by ascorbate, or by some other reducing agent, in a Cu(2+)- or Zn(2+) dependent manner. Cu(2+) ions are provided by ceruloproteins such as APP, PRNP or CP which associate with GCP1 in intracellular compartments or lipid rafts. Post-translationally, shed from the cell surface probably by further cleavage.

The protein resides in the cell membrane. The protein localises to the endosome. Its subcellular location is the secreted. It localises to the extracellular space. In terms of biological role, cell surface proteoglycan that bears heparan sulfate. Binds, via the heparan sulfate side chains, alpha-4 (V) collagen and participates in Schwann cell myelination. May act as a catalyst in increasing the rate of conversion of prion protein PRPN (C) to PRNP (Sc) via associating (via the heparan sulfate side chains) with both forms of PRPN, targeting them to lipid rafts and facilitating their interaction. Required for proper skeletal muscle differentiation by sequestering FGF2 in lipid rafts preventing its binding to receptors (FGFRs) and inhibiting the FGF-mediated signaling. The protein is Glypican-1 (GPC1) of Bos taurus (Bovine).